The following is a 347-amino-acid chain: NADH-ubiquinone oxidoreductase chain 2 (347 aa).

The next 11 membrane-spanning stretches (helical) occupy residues 2–22 (SPYV…MTLI), 25–45 (HWLT…PLMT), 56–76 (AIKY…SAIF), 96–116 (FMMT…FWVP), 122–142 (IPLL…ISIF), 149–169 (LNMS…GWGG), 178–197 (ILAY…IMIY), 202–219 (ILNL…FMVL), 241–261 (MIII…TGFM), 278–298 (LAMM…RIIY), and 326–346 (IPTL…FITL).

It belongs to the complex I subunit 2 family.

The protein localises to the mitochondrion inner membrane. The catalysed reaction is a ubiquinone + NADH + 5 H(+)(in) = a ubiquinol + NAD(+) + 4 H(+)(out). Its function is as follows. Core subunit of the mitochondrial membrane respiratory chain NADH dehydrogenase (Complex I) that is believed to belong to the minimal assembly required for catalysis. Complex I functions in the transfer of electrons from NADH to the respiratory chain. The immediate electron acceptor for the enzyme is believed to be ubiquinone. The protein is NADH-ubiquinone oxidoreductase chain 2 (MT-ND2) of Didelphis virginiana (North American opossum).